Here is an 87-residue protein sequence, read N- to C-terminus: Exodeoxyribonuclease 7 small subunit (87 aa).

It belongs to the XseB family. As to quaternary structure, heterooligomer composed of large and small subunits.

The protein resides in the cytoplasm. The enzyme catalyses Exonucleolytic cleavage in either 5'- to 3'- or 3'- to 5'-direction to yield nucleoside 5'-phosphates.. In terms of biological role, bidirectionally degrades single-stranded DNA into large acid-insoluble oligonucleotides, which are then degraded further into small acid-soluble oligonucleotides. This is Exodeoxyribonuclease 7 small subunit from Solidesulfovibrio magneticus (strain ATCC 700980 / DSM 13731 / RS-1) (Desulfovibrio magneticus).